The primary structure comprises 1357 residues: DNA-directed RNA polymerase subunit beta (1357 aa).

This sequence belongs to the RNA polymerase beta chain family. In terms of assembly, the RNAP catalytic core consists of 2 alpha, 1 beta, 1 beta' and 1 omega subunit. When a sigma factor is associated with the core the holoenzyme is formed, which can initiate transcription.

The catalysed reaction is RNA(n) + a ribonucleoside 5'-triphosphate = RNA(n+1) + diphosphate. In terms of biological role, DNA-dependent RNA polymerase catalyzes the transcription of DNA into RNA using the four ribonucleoside triphosphates as substrates. In Neorickettsia sennetsu (Ehrlichia sennetsu), this protein is DNA-directed RNA polymerase subunit beta.